Reading from the N-terminus, the 420-residue chain is MAAKRTHERDPIYKIKGLAKDMLDGVFDDLMDKNVLNGDELLKIGEGASLILSKAENLVESFFEKTEMAGKIFAGHIANSDKQLSLQFPSDDEEDELQKMFTPSSASESRGKVEDEEMEVNVGVAHASHLMLTVPQGIQSTEVQDSLKLCSRDWFCTMKTERAEEIYPVMEKEGRTRLALIICNKKFDYLFDRDDAETDILNMKELLQNLGYSVVIKENLTAQEMETELMKFAGRPEHQSSDSTFLVFMSHGILEGICGVKHRNKKPDVLHDDTIFTIFNNSNCPSLRNKPKILIMQACRGRHTGTIWVSTSKGIATADTDEECVLSHRWNNSITKAHVETDFIAFKSSTPHNISWKVGKSGSLFISKLIDCFKKYCWCYHLEEIFRKVQYSFEVPGELTQMPTIERVSMTRYFYLFPGN.

Residues 1–92 (MAAKRTHERD…QLSLQFPSDD (92 aa)) form the CARD domain. Phosphoserine occurs at positions 85 and 90. The tract at residues 93–115 (EEDELQKMFTPSSASESRGKVED) is disordered. Catalysis depends on residues His251 and Cys299.

The protein belongs to the peptidase C14A family. Heterotetramer that consists of two anti-parallel arranged heterodimers, each one formed by two subunits (Potential). May interact with TRAF2.

Its function is as follows. Involved in the activation cascade of caspases responsible for apoptosis execution. The chain is Caspase-12 (Casp12) from Rattus norvegicus (Rat).